The following is a 291-amino-acid chain: MSSTEPDALLGPADIRDLAATLGVRPTKQRGQNFVIDANTVRRIVRTAEVRPDDTVVEVGPGLGSLTLALLEAADRVVAVEIDDVLAAALPATVQARMPERADRFALVHSDAMLVTELPGPAPTALVANLPYNVAVPVLLTMLERFPSIERTLVMVQSEVADRLAARPGNKVYGVPSVKANWYADVKRAGAIGRNVFWPAPNVDSGLVSLVRRTEPIATTASRAEVFAVVDAAFAQRRKTLRAALSGWAGSAPAAEAALVAAGISPQARGEALTVEEFAAIAEHKPEVSSL.

Residues Asn33, Val35, Gly60, Glu81, Asp111, and Asn129 each coordinate S-adenosyl-L-methionine.

The protein belongs to the class I-like SAM-binding methyltransferase superfamily. rRNA adenine N(6)-methyltransferase family. RsmA subfamily.

The protein localises to the cytoplasm. It catalyses the reaction adenosine(1518)/adenosine(1519) in 16S rRNA + 4 S-adenosyl-L-methionine = N(6)-dimethyladenosine(1518)/N(6)-dimethyladenosine(1519) in 16S rRNA + 4 S-adenosyl-L-homocysteine + 4 H(+). Functionally, specifically dimethylates two adjacent adenosines (A1518 and A1519) in the loop of a conserved hairpin near the 3'-end of 16S rRNA in the 30S particle. May play a critical role in biogenesis of 30S subunits. The sequence is that of Ribosomal RNA small subunit methyltransferase A from Streptomyces griseus subsp. griseus (strain JCM 4626 / CBS 651.72 / NBRC 13350 / KCC S-0626 / ISP 5235).